The following is a 186-amino-acid chain: Ribosome-recycling factor (186 aa).

This sequence belongs to the RRF family.

It localises to the cytoplasm. Its function is as follows. Responsible for the release of ribosomes from messenger RNA at the termination of protein biosynthesis. May increase the efficiency of translation by recycling ribosomes from one round of translation to another. The chain is Ribosome-recycling factor from Chlorobium phaeobacteroides (strain BS1).